We begin with the raw amino-acid sequence, 88 residues long: Small ribosomal subunit protein uS15 (88 aa).

The protein belongs to the universal ribosomal protein uS15 family. Part of the 30S ribosomal subunit. Forms a bridge to the 50S subunit in the 70S ribosome, contacting the 23S rRNA.

In terms of biological role, one of the primary rRNA binding proteins, it binds directly to 16S rRNA where it helps nucleate assembly of the platform of the 30S subunit by binding and bridging several RNA helices of the 16S rRNA. Its function is as follows. Forms an intersubunit bridge (bridge B4) with the 23S rRNA of the 50S subunit in the ribosome. The chain is Small ribosomal subunit protein uS15 from Methylacidiphilum infernorum (isolate V4) (Methylokorus infernorum (strain V4)).